The primary structure comprises 776 residues: Ion-translocating oxidoreductase complex subunit C (776 aa).

2 consecutive 4Fe-4S ferredoxin-type domains span residues 368–397 and 407–436; these read MGAPQEEQHCIRCSACADACPADLLPQQLY and KATAHNLADCIECGACAYVCPSNIPLVQYF. The [4Fe-4S] cluster site is built by C377, C380, C383, C387, C416, C419, C422, and C426. Composition is skewed to basic and acidic residues over residues 534–543, 597–611, 633–647, 669–683, and 705–719; these read ARARQAEKVQ, ADEKPAEPIDPRKAA, and ADEKPAEPIDPRKAT. Residues 534 to 754 form a disordered region; sequence ARARQAEKVQ…ENEAEDPRKA (221 aa). A compositionally biased stretch (low complexity) spans 721-743; it reads EAAIARAKARKAAQAGERAQAAN.

It belongs to the 4Fe4S bacterial-type ferredoxin family. RnfC subfamily. As to quaternary structure, the complex is composed of six subunits: RnfA, RnfB, RnfC, RnfD, RnfE and RnfG. Requires [4Fe-4S] cluster as cofactor.

Its subcellular location is the cell inner membrane. In terms of biological role, part of a membrane-bound complex that couples electron transfer with translocation of ions across the membrane. The polypeptide is Ion-translocating oxidoreductase complex subunit C (Cronobacter sakazakii (strain ATCC BAA-894) (Enterobacter sakazakii)).